Here is a 600-residue protein sequence, read N- to C-terminus: ATP-dependent lipid A-core flippase (600 aa).

4 consecutive transmembrane segments (helical) span residues 26-46 (VGIF…QPML), 82-102 (LLIV…NYFL), 167-187 (VFLF…MLAI), and 266-286 (PMLQ…VLFL). The ABC transmembrane type-1 domain maps to 30 to 321 (LLSIIGFVIF…LSEVSSTIQK (292 aa)). Residues 353–589 (LEVKNLSFFY…NGYYARLHAM (237 aa)) enclose the ABC transporter domain. Residue 387–394 (GRSGSGKS) coordinates ATP.

This sequence belongs to the ABC transporter superfamily. Lipid exporter (TC 3.A.1.106) family. As to quaternary structure, homodimer.

Its subcellular location is the cell inner membrane. It carries out the reaction ATP + H2O + lipid A-core oligosaccharideSide 1 = ADP + phosphate + lipid A-core oligosaccharideSide 2.. Its function is as follows. Involved in lipopolysaccharide (LPS) biosynthesis. Translocates lipid A-core from the inner to the outer leaflet of the inner membrane. Transmembrane domains (TMD) form a pore in the inner membrane and the ATP-binding domain (NBD) is responsible for energy generation. This is ATP-dependent lipid A-core flippase from Pseudomonas syringae pv. syringae (strain B728a).